The following is a 1056-amino-acid chain: 120.7 kDa protein in NOF-FB transposable element (1056 aa).

The interval 716–749 (KTIKPTEGNDAEDNDTDDENKEMDLSEQPKEKPR) is disordered. Acidic residues predominate over residues 724 to 736 (NDAEDNDTDDENK). Positions 737–749 (EMDLSEQPKEKPR) are enriched in basic and acidic residues.

It is found in the nucleus. Functionally, may be involved in the transposition of NOF-FB and other FB elements. This is 120.7 kDa protein in NOF-FB transposable element (NOF) from Drosophila melanogaster (Fruit fly).